The following is a 202-amino-acid chain: CASP-like protein 2U7 (202 aa).

Residues 1-10 are Cytoplasmic-facing; that stretch reads MLELYEKRRA. Residues 11-31 traverse the membrane as a helical segment; that stretch reads LLLLRLAAMFLSLAALLITVL. At 32-64 the chain is on the extracellular side; it reads NREDGFFSINVFGSPQPILTKATADFTLVKGLK. The helical transmembrane segment at 65–85 threads the bilayer; sequence FFAGAMGIVAGYSFLQLAIAM. The Cytoplasmic segment spans residues 86-101; sequence ASMFSGAPSILGGKRM. The chain crosses the membrane as a helical span at residues 102 to 122; it reads AWLCFVGDMTASHLCAAAAAV. Over 123–148 the chain is Extracellular; that stretch reads SAQLAYLGKRGAPMWSAVCTYFSHYC. Residues 149-169 form a helical membrane-spanning segment; the sequence is LVFGLAVIFAFLATLAALLVA. Residues 170–202 are Cytoplasmic-facing; the sequence is SISSYHLFRLHGILQQQQQQRRQLQQEHVQDKP.

The protein belongs to the Casparian strip membrane proteins (CASP) family. As to quaternary structure, homodimer and heterodimers.

It localises to the cell membrane. The sequence is that of CASP-like protein 2U7 from Selaginella moellendorffii (Spikemoss).